The primary structure comprises 600 residues: Elongation factor 4 (600 aa).

A tr-type G domain is found at 3-185 (KYIRNFSIIA…CLIHDIPHPQ (183 aa)). Residues 15–20 (DHGKST) and 132–135 (NKID) contribute to the GTP site.

Belongs to the TRAFAC class translation factor GTPase superfamily. Classic translation factor GTPase family. LepA subfamily.

Its subcellular location is the cell inner membrane. It carries out the reaction GTP + H2O = GDP + phosphate + H(+). Required for accurate and efficient protein synthesis under certain stress conditions. May act as a fidelity factor of the translation reaction, by catalyzing a one-codon backward translocation of tRNAs on improperly translocated ribosomes. Back-translocation proceeds from a post-translocation (POST) complex to a pre-translocation (PRE) complex, thus giving elongation factor G a second chance to translocate the tRNAs correctly. Binds to ribosomes in a GTP-dependent manner. This Blochmanniella pennsylvanica (strain BPEN) protein is Elongation factor 4.